Consider the following 119-residue polypeptide: MIARRNPEPLRFLPDEARSLPPPKLTDPRLLYIGFLGYCSGLIDNLIRRRPIATAGLHRQLLYITAFFFAGYYLVKREDYLYAVRDREMFGYMKLHPEDFPEEDKKTYGEIFEKFHPIR.

The chain crosses the membrane as a helical span at residues 56–75 (GLHRQLLYITAFFFAGYYLV).

It belongs to the complex I NDUFC2 subunit family. As to quaternary structure, complex I is composed of 45 different subunits. Interacts with TMEM242.

It is found in the mitochondrion inner membrane. Its function is as follows. Accessory subunit of the mitochondrial membrane respiratory chain NADH dehydrogenase (Complex I), that is believed not to be involved in catalysis but required for the complex assembly. Complex I functions in the transfer of electrons from NADH to the respiratory chain. The immediate electron acceptor for the enzyme is believed to be ubiquinone. This Gorilla gorilla gorilla (Western lowland gorilla) protein is NADH dehydrogenase [ubiquinone] 1 subunit C2.